The primary structure comprises 393 residues: MLPEELAGACGIDLTDARRIVSLAHRLGELPARAPATVRRAALDAARSAGEIRTLALVERRASAEDPFVKYAFRLEDGATVESVRIPLERPGRYSACVSSQVGCALACAFCATGRMGLTRNLEAWEIVEQVRLIRRDLDATVGGGARVHGVLFQGMGEPLANADRVIQAIRVLSEPSAQAIDMRNITVCTAGLPSGIRRLAAEVPAVRLGLSLGSVRPGKRRLLMPIDGAHPLEEVLAAVGEHARASGHAPMWAYTLLADQNDTDEDAACLAALARGFAAQHGISPRLSLIPYNAIGAPGDPLPSPDGGDERGASADPFVRSARLDAFRAVLSAAGVGSIVRYSGGGDVGAACGQLARPSAEAQRPGGRRAPPRPGATAGAADVGPSAPPRPA.

Glu-82 (proton acceptor) is an active-site residue. In terms of domain architecture, Radical SAM core spans 90–329 (RPGRYSACVS…VRSARLDAFR (240 aa)). The cysteines at positions 97 and 353 are disulfide-linked. [4Fe-4S] cluster-binding residues include Cys-104, Cys-108, and Cys-111. S-adenosyl-L-methionine-binding positions include 157 to 158 (GE), 212 to 214 (SLG), and Asn-294. Residue Cys-353 is the S-methylcysteine intermediate of the active site. The segment at 357 to 393 (ARPSAEAQRPGGRRAPPRPGATAGAADVGPSAPPRPA) is disordered. A compositionally biased stretch (low complexity) spans 373–382 (PRPGATAGAA).

The protein belongs to the radical SAM superfamily. RlmN family. The cofactor is [4Fe-4S] cluster.

The protein resides in the cytoplasm. This chain is Probable RNA methyltransferase sce3898, found in Sorangium cellulosum (strain So ce56) (Polyangium cellulosum (strain So ce56)).